A 397-amino-acid polypeptide reads, in one-letter code: Protein shisa-8 (397 aa).

The first 38 residues, 1–38 (MARAGARGLLGGRRPPGLRLALALRLALLLARPPSGRA), serve as a signal peptide directing secretion. The Extracellular segment spans residues 39–138 (GAPEAQGPAA…APRDPGRERS (100 aa)). An N-linked (GlcNAc...) asparagine glycan is attached at Asn75. Residues 117–136 (TGRPPARARDTAAPRDPGRE) form a disordered region. Basic and acidic residues predominate over residues 123–136 (RARDTAAPRDPGRE). Residues 139–159 (HTAVYAVCGVAALLVLAGIGA) traverse the membrane as a helical segment. Topologically, residues 160-397 (RLGLERAHSP…RTNSKTEVTV (238 aa)) are cytoplasmic. Disordered regions lie at residues 182 to 250 (LLKQ…GGSL) and 281 to 303 (FPAL…PDLP). 2 stretches are compositionally biased toward pro residues: residues 188–197 (PQEPLPPTLG) and 288–303 (PRQP…PDLP).

The protein belongs to the shisa family. As to quaternary structure, interacts with AMPAR subunits GRIA1 and GRIA2.

The protein localises to the membrane. In terms of biological role, may regulate trafficking and current kinetics of AMPA-type glutamate receptor (AMPAR) at synapses. This chain is Protein shisa-8, found in Homo sapiens (Human).